The primary structure comprises 124 residues: Ribonuclease pancreatic (124 aa).

A disordered region spans residues Ala-1–Thr-21. Substrate-binding residues include Lys-7 and Arg-10. His-12 acts as the Proton acceptor in catalysis. Intrachain disulfides connect Cys-26/Cys-84, Cys-40/Cys-95, Cys-58/Cys-110, and Cys-65/Cys-72. Substrate is bound by residues Lys-41 to Thr-45, Lys-66, and Arg-85. Catalysis depends on His-119, which acts as the Proton donor.

The protein belongs to the pancreatic ribonuclease family. Monomer. Interacts with and forms tight 1:1 complexes with RNH1. Dimerization of two such complexes may occur. Interaction with RNH1 inhibits this protein. In terms of tissue distribution, pancreas.

It localises to the secreted. It carries out the reaction an [RNA] containing cytidine + H2O = an [RNA]-3'-cytidine-3'-phosphate + a 5'-hydroxy-ribonucleotide-3'-[RNA].. It catalyses the reaction an [RNA] containing uridine + H2O = an [RNA]-3'-uridine-3'-phosphate + a 5'-hydroxy-ribonucleotide-3'-[RNA].. Endonuclease that catalyzes the cleavage of RNA on the 3' side of pyrimidine nucleotides. Acts on single-stranded and double-stranded RNA. This is Ribonuclease pancreatic (RNASE1) from Galea musteloides (Common yellow-toothed cavy).